The chain runs to 84 residues: Sec-independent protein translocase protein TatA (84 aa).

Residues 4–24 (MSPVHWLILAVVLLVVFGGGG) form a helical membrane-spanning segment. The segment at 46–84 (DDESMTATDATQAPGHISPPNQNPGYSQTTSSETHRNQV) is disordered. The segment covering 64–77 (PPNQNPGYSQTTSS) has biased composition (polar residues).

It belongs to the TatA/E family. As to quaternary structure, the Tat system comprises two distinct complexes: a TatABC complex, containing multiple copies of TatA, TatB and TatC subunits, and a separate TatA complex, containing only TatA subunits. Substrates initially bind to the TatABC complex, which probably triggers association of the separate TatA complex to form the active translocon.

The protein resides in the cell inner membrane. In terms of biological role, part of the twin-arginine translocation (Tat) system that transports large folded proteins containing a characteristic twin-arginine motif in their signal peptide across membranes. TatA could form the protein-conducting channel of the Tat system. This Gluconobacter oxydans (strain 621H) (Gluconobacter suboxydans) protein is Sec-independent protein translocase protein TatA.